A 351-amino-acid chain; its full sequence is Hydroxymethylglutaryl-CoA synthase (351 aa).

Glu80 acts as the Proton donor/acceptor in catalysis. Cys112 serves as the catalytic Acyl-thioester intermediate. Residues Cys112 and Ser153 each contribute to the (3S)-3-hydroxy-3-methylglutaryl-CoA site. Residue Arg199 participates in CoA binding. Residues Thr201 and His234 each coordinate (3S)-3-hydroxy-3-methylglutaryl-CoA. His234 (proton donor/acceptor) is an active-site residue. Lys239 contacts CoA. 3 residues coordinate (3S)-3-hydroxy-3-methylglutaryl-CoA: Arg243, Asn266, and Ser296.

The protein belongs to the thiolase-like superfamily. Archaeal HMG-CoA synthase family. As to quaternary structure, interacts with acetoacetyl-CoA thiolase that catalyzes the precedent step in the pathway and with a DUF35 protein. The acetoacetyl-CoA thiolase/HMG-CoA synthase complex channels the intermediate via a fused CoA-binding site, which allows for efficient coupling of the endergonic thiolase reaction with the exergonic HMGCS reaction.

The enzyme catalyses acetoacetyl-CoA + acetyl-CoA + H2O = (3S)-3-hydroxy-3-methylglutaryl-CoA + CoA + H(+). It participates in metabolic intermediate biosynthesis; (R)-mevalonate biosynthesis; (R)-mevalonate from acetyl-CoA: step 2/3. Its function is as follows. Catalyzes the condensation of acetyl-CoA with acetoacetyl-CoA to form 3-hydroxy-3-methylglutaryl-CoA (HMG-CoA). Functions in the mevalonate (MVA) pathway leading to isopentenyl diphosphate (IPP), a key precursor for the biosynthesis of isoprenoid compounds that are building blocks of archaeal membrane lipids. This Thermoplasma acidophilum (strain ATCC 25905 / DSM 1728 / JCM 9062 / NBRC 15155 / AMRC-C165) protein is Hydroxymethylglutaryl-CoA synthase.